A 366-amino-acid chain; its full sequence is uncharacterized protein (366 aa).

The region spanning Ala63–Ala288 is the OBG-type G domain. GTP is bound by residues Gly69 to Ser76, Asp115 to Ile119, and Asn246 to Asp249. In terms of domain architecture, TGS spans Ala288–Lys365.

Belongs to the TRAFAC class OBG-HflX-like GTPase superfamily. OBG GTPase family.

This is an uncharacterized protein from Caenorhabditis elegans.